Reading from the N-terminus, the 618-residue chain is Serine--tRNA ligase, cytoplasmic (618 aa).

417-419 (TSE) is an L-serine binding site. 448-450 (RTE) is a binding site for ATP. Glu-472 lines the L-serine pocket. 536-539 (EVSS) is a binding site for ATP. Ser-570 serves as a coordination point for L-serine.

This sequence belongs to the class-II aminoacyl-tRNA synthetase family. Type-1 seryl-tRNA synthetase subfamily. In terms of assembly, homodimer. The tRNA molecule binds across the dimer.

It is found in the cytoplasm. It catalyses the reaction tRNA(Ser) + L-serine + ATP = L-seryl-tRNA(Ser) + AMP + diphosphate + H(+). The enzyme catalyses tRNA(Sec) + L-serine + ATP = L-seryl-tRNA(Sec) + AMP + diphosphate + H(+). It functions in the pathway aminoacyl-tRNA biosynthesis; selenocysteinyl-tRNA(Sec) biosynthesis; L-seryl-tRNA(Sec) from L-serine and tRNA(Sec): step 1/1. In terms of biological role, catalyzes the attachment of serine to tRNA(Ser). Is also able to aminoacylate tRNA(Sec) with serine, to form the misacylated tRNA L-seryl-tRNA(Sec), which will be further converted into selenocysteinyl-tRNA(Sec). The polypeptide is Serine--tRNA ligase, cytoplasmic (Plasmodium falciparum (isolate 3D7)).